A 255-amino-acid chain; its full sequence is Type III pantothenate kinase (255 aa).

An ATP-binding site is contributed by 6-13; sequence DVGNTNTV. Residues Tyr-100 and 107–110 contribute to the substrate site; that span reads GADR. Asp-109 serves as the catalytic Proton acceptor. Asp-129 provides a ligand contact to K(+). An ATP-binding site is contributed by Thr-132. Thr-184 serves as a coordination point for substrate.

This sequence belongs to the type III pantothenate kinase family. Homodimer. The cofactor is NH4(+). It depends on K(+) as a cofactor.

The protein resides in the cytoplasm. It catalyses the reaction (R)-pantothenate + ATP = (R)-4'-phosphopantothenate + ADP + H(+). The protein operates within cofactor biosynthesis; coenzyme A biosynthesis; CoA from (R)-pantothenate: step 1/5. In terms of biological role, catalyzes the phosphorylation of pantothenate (Pan), the first step in CoA biosynthesis. This is Type III pantothenate kinase from Acetivibrio thermocellus (strain ATCC 27405 / DSM 1237 / JCM 9322 / NBRC 103400 / NCIMB 10682 / NRRL B-4536 / VPI 7372) (Clostridium thermocellum).